A 366-amino-acid polypeptide reads, in one-letter code: Aminomethyltransferase (366 aa).

It belongs to the GcvT family. In terms of assembly, the glycine cleavage system is composed of four proteins: P, T, L and H.

It carries out the reaction N(6)-[(R)-S(8)-aminomethyldihydrolipoyl]-L-lysyl-[protein] + (6S)-5,6,7,8-tetrahydrofolate = N(6)-[(R)-dihydrolipoyl]-L-lysyl-[protein] + (6R)-5,10-methylene-5,6,7,8-tetrahydrofolate + NH4(+). Functionally, the glycine cleavage system catalyzes the degradation of glycine. The chain is Aminomethyltransferase from Sodalis glossinidius (strain morsitans).